The primary structure comprises 90 residues: Putative antitoxin VapB8 (90 aa).

The segment at 1–56 is disordered; that stretch reads MEKSRCHAVAHGGGCAGSAKSHKSGGRCGQGRGAGDSHGTRGAGRRYRAASAPHPL. The span at 26 to 36 shows a compositional bias: gly residues; the sequence is GRCGQGRGAGD.

In terms of biological role, antitoxin component of a possible type II toxin-antitoxin (TA) system. The cognate toxin is VapC8. The protein is Putative antitoxin VapB8 (vapB8) of Mycobacterium tuberculosis (strain ATCC 25618 / H37Rv).